We begin with the raw amino-acid sequence, 152 residues long: Small ribosomal subunit protein uS15 (152 aa).

Over residues 1–10 (MARMYARRRG) the composition is skewed to basic residues. The disordered stretch occupies residues 1-24 (MARMYARRRGTSSSVRPYRKEAPE).

The protein belongs to the universal ribosomal protein uS15 family. As to quaternary structure, part of the 30S ribosomal subunit.

This is Small ribosomal subunit protein uS15 from Methanoculleus marisnigri (strain ATCC 35101 / DSM 1498 / JR1).